A 369-amino-acid chain; its full sequence is Glutamate 5-kinase (369 aa).

Lys-9 contributes to the ATP binding site. Substrate contacts are provided by Ser-49, Asp-136, and Asn-148. ATP-binding positions include 168–169 (TD) and 210–216 (TGGMLTK). In terms of domain architecture, PUA spans 275–355 (QGSIWVDKGA…KGVLIYRDDW (81 aa)).

It belongs to the glutamate 5-kinase family.

Its subcellular location is the cytoplasm. The enzyme catalyses L-glutamate + ATP = L-glutamyl 5-phosphate + ADP. It functions in the pathway amino-acid biosynthesis; L-proline biosynthesis; L-glutamate 5-semialdehyde from L-glutamate: step 1/2. Functionally, catalyzes the transfer of a phosphate group to glutamate to form L-glutamate 5-phosphate. The chain is Glutamate 5-kinase from Streptococcus pneumoniae (strain 70585).